A 772-amino-acid polypeptide reads, in one-letter code: Lon protease (772 aa).

Residues 6 to 200 (YPTLPLKNTV…LMHRYLNHEV (195 aa)) enclose the Lon N-terminal domain. 352–359 (GPPGVGKT) lines the ATP pocket. The Lon proteolytic domain maps to 588-769 (QLAPGVAAGL…EEVLAEAIPD (182 aa)). Active-site residues include serine 675 and lysine 718.

The protein belongs to the peptidase S16 family. In terms of assembly, homohexamer. Organized in a ring with a central cavity.

The protein resides in the cytoplasm. The enzyme catalyses Hydrolysis of proteins in presence of ATP.. ATP-dependent serine protease that mediates the selective degradation of mutant and abnormal proteins as well as certain short-lived regulatory proteins. Required for cellular homeostasis and for survival from DNA damage and developmental changes induced by stress. Degrades polypeptides processively to yield small peptide fragments that are 5 to 10 amino acids long. Binds to DNA in a double-stranded, site-specific manner. This is Lon protease from Nitrosococcus oceani (strain ATCC 19707 / BCRC 17464 / JCM 30415 / NCIMB 11848 / C-107).